A 625-amino-acid chain; its full sequence is Chaperone protein HtpG (625 aa).

Residues Met-1–Arg-337 form an a; substrate-binding region. The interval Glu-338 to Lys-554 is b. The c stretch occupies residues Leu-555–Gly-625.

This sequence belongs to the heat shock protein 90 family. As to quaternary structure, homodimer.

It is found in the cytoplasm. Its function is as follows. Molecular chaperone. Has ATPase activity. This Actinobacillus pleuropneumoniae serotype 5b (strain L20) protein is Chaperone protein HtpG.